The chain runs to 405 residues: Terminal uridylyltransferase cid1 (405 aa).

Residue S90 coordinates UTP. Mg(2+) is bound by residues D101 and D103. The UTP site is built by A168, N171, T172, K193, K197, S211, Y212, and H336. In terms of domain architecture, PAP-associated spans 267–336; it reads SLGSLLHGFF…AIEDPFEISH (70 aa). An ATP-binding site is contributed by R340. A disordered region spans residues 377–405; it reads APIPPRRQKKTDEQSNKKLLNETDGDNSE. Over residues 386–397 the composition is skewed to basic and acidic residues; it reads KTDEQSNKKLLN.

Belongs to the DNA polymerase type-B-like family. Requires Mg(2+) as cofactor. Mn(2+) is required as a cofactor.

It is found in the cytoplasm. The catalysed reaction is RNA(n) + UTP = RNA(n)-3'-uridine ribonucleotide + diphosphate. It carries out the reaction RNA(n) + ATP = RNA(n)-3'-adenine ribonucleotide + diphosphate. Functionally, cytoplasmic uridylyltransferase that mediates the terminal uridylation of mRNAs with short poly(A) tails such as such as act1, hcn1 and urg1 mRNAs, hence facilitating global mRNA decay. Uridylates the 3' ends of actin mRNAs upon S-phase arrest. Also has a weak poly(A) polymerase (PAP) activity. Residue His-336 is responsible for the specificity for UTP. Involved in cell cycle arrest where in association with crb2/rhp9 and chk1 it inhibits unscheduled mitosis. In Schizosaccharomyces pombe (strain 972 / ATCC 24843) (Fission yeast), this protein is Terminal uridylyltransferase cid1.